The chain runs to 462 residues: Serine--tRNA ligase, cytoplasmic (462 aa).

Residue 246–248 (TSE) participates in L-serine binding. Residues 279–281 (RRE) and Val295 contribute to the ATP site. Residue Glu302 coordinates L-serine. 366–369 (ELVS) serves as a coordination point for ATP. Thr404 is a binding site for L-serine.

The protein belongs to the class-II aminoacyl-tRNA synthetase family. Type-1 seryl-tRNA synthetase subfamily. In terms of assembly, homodimer. The tRNA molecule binds across the dimer.

It is found in the cytoplasm. Its subcellular location is the cytosol. The enzyme catalyses tRNA(Ser) + L-serine + ATP = L-seryl-tRNA(Ser) + AMP + diphosphate + H(+). Its function is as follows. Catalyzes the attachment of serine to tRNA(Ser) in a two-step reaction: serine is first activated by ATP to form Ser-AMP and then transferred to the acceptor end of tRNA(Ser). This Candida albicans (strain SC5314 / ATCC MYA-2876) (Yeast) protein is Serine--tRNA ligase, cytoplasmic (SES1).